Consider the following 602-residue polypeptide: Zinc finger MYND domain-containing protein 11 (602 aa).

The SAMD1-like winged helix (WH) domain maps to 6-82; that stretch reads KRRQADTKAI…CKGSKAGIEQ (77 aa). A PHD-type zinc finger spans residues 100-148; that stretch reads DWYCFECHLPGEVLICDLCFRVYHSKCLSDEFRLRDSSSHWQCPVCRSI. The Bromo domain maps to 149–255; it reads KKKHSNKQEM…KDTCHELDEL (107 aa). Residues Cys-258, Cys-261, Cys-277, and His-281 each coordinate Zn(2+). A PWWP domain is found at 280–331; it reads NHELVWAKMKGFGFWPAKVMQKEDNQVDVRFFGHHHQRAWIPSENIQDITVN. Residues 291 to 310 form an aromatic cage required for H3.3K36me3-specific binding region; the sequence is FGFWPAKVMQKEDNQVDVRF. Lys-366 is covalently cross-linked (Glycyl lysine isopeptide (Lys-Gly) (interchain with G-Cter in SUMO2)). The disordered stretch occupies residues 366-461; the sequence is KNEDRGEEEA…HRSTQTTSDG (96 aa). The Nuclear localization signal signature appears at 394–400; the sequence is RAKKGRR. Glycyl lysine isopeptide (Lys-Gly) (interchain with G-Cter in SUMO2) cross-links involve residues Lys-407 and Lys-408. Ser-421 bears the Phosphoserine mark. The span at 435–461 shows a compositional bias: polar residues; the sequence is SVSTQTKKLSASSPRMLHRSTQTTSDG. Cys-563, Cys-566, Cys-574, Cys-575, Cys-581, Cys-585, His-594, and Cys-598 together coordinate Zn(2+). An MYND-type zinc finger spans residues 563-598; that stretch reads CYNCEEEAMYHCCWNTSYCSIKCQQEHWHAEHKRTC.

In terms of assembly, homooligomer; forms homooligomers via its C-terminus. Interacts with histone H3.3 trimethylated at 'Lys-36' (H3.3K36me3). Interacts (via MYND-type zinc finger) with NCOR1. Interacts (via MYND-type zinc finger) with MGA protein (via PXLXP motif). Interacts (via MYND-type zinc finger) with EZH2. Interacts with EMSY and E2F6. Interacts with PIAS1 and UBE2I. Ubiquitinated, leading to proteasomal degradation. In terms of processing, sumoylated following its interaction with PIAS1 and UBE2I.

The protein resides in the nucleus. Its subcellular location is the chromosome. Its function is as follows. Chromatin reader that specifically recognizes and binds histone H3.3 trimethylated at 'Lys-36' (H3.3K36me3) and regulates RNA polymerase II elongation. Does not bind other histone H3 subtypes (H3.1 or H3.2). Colocalizes with highly expressed genes and functions as a transcription corepressor by modulating RNA polymerase II at the elongation stage. Binds non-specifically to dsDNA. Acts as a tumor-suppressor by repressing a transcriptional program essential for tumor cell growth. The sequence is that of Zinc finger MYND domain-containing protein 11 (Zmynd11) from Mus musculus (Mouse).